Here is a 163-residue protein sequence, read N- to C-terminus: IQSTSMDQGILTEDSMNSFIRTLIQAGIWKNKVPKQTARTKDGTQTTVKKSEAEADATASQDTRLGFQPVVSVDAELLRQQRRFSSPRVLLSENTPLEPPPLYLTEEPVVLNRTSRRKREGKSHRGEYSVCDSESRWVTDKSSAVDIRGHQVTVLGEIRMGPS.

A signal peptide spans 1–3 (IQS). Positions 4–119 (TSMDQGILTE…VLNRTSRRKR (116 aa)) are excised as a propeptide. The interval 35–61 (KQTARTKDGTQTTVKKSEAEADATASQ) is disordered. An N-linked (GlcNAc...) asparagine glycan is attached at Asn-112.

It belongs to the NGF-beta family.

It is found in the secreted. Functionally, seems to promote the survival of visceral and proprioceptive sensory neurons. In Corallus caninus (Emerald tree boa), this protein is Neurotrophin-3 (NTF3).